A 149-amino-acid polypeptide reads, in one-letter code: 3-dehydroquinate dehydratase (149 aa).

The active-site Proton acceptor is Tyr-26. Positions 77, 83, and 90 each coordinate substrate. Residue His-103 is the Proton donor of the active site. Substrate contacts are provided by residues 104 to 105 (LS) and Arg-114.

It belongs to the type-II 3-dehydroquinase family. As to quaternary structure, homododecamer.

It catalyses the reaction 3-dehydroquinate = 3-dehydroshikimate + H2O. The protein operates within metabolic intermediate biosynthesis; chorismate biosynthesis; chorismate from D-erythrose 4-phosphate and phosphoenolpyruvate: step 3/7. Catalyzes a trans-dehydration via an enolate intermediate. This Psychromonas ingrahamii (strain DSM 17664 / CCUG 51855 / 37) protein is 3-dehydroquinate dehydratase.